The sequence spans 343 residues: Protein RecA (343 aa).

68–75 (GPESGGKT) is an ATP binding site.

It belongs to the RecA family.

It is found in the cytoplasm. Can catalyze the hydrolysis of ATP in the presence of single-stranded DNA, the ATP-dependent uptake of single-stranded DNA by duplex DNA, and the ATP-dependent hybridization of homologous single-stranded DNAs. It interacts with LexA causing its activation and leading to its autocatalytic cleavage. This chain is Protein RecA, found in Syntrophus aciditrophicus (strain SB).